The primary structure comprises 201 residues: Homeobox protein goosecoid-2 (201 aa).

Disordered regions lie at residues M1–P55, P95–R124, and R179–C201. The segment covering P95 to A106 has biased composition (low complexity). Residues T123 to K182 constitute a DNA-binding region (homeobox).

Belongs to the paired homeobox family. Bicoid subfamily. Expressed in adult testis.

The protein resides in the nucleus. In terms of biological role, may have a role in development. May regulate its own transcription. May bind the bicoid consensus sequence TAATCC. The chain is Homeobox protein goosecoid-2 (Gsc2) from Mus musculus (Mouse).